Here is a 243-residue protein sequence, read N- to C-terminus: Calcium-binding protein LPS1-beta (243 aa).

EF-hand domains follow at residues Glu-15 to Glu-49, Cys-47 to Glu-82, Tyr-85 to Lys-120, Leu-121 to Leu-156, Cys-157 to Gly-189, Tyr-191 to Asp-226, and Asp-227 to Ile-243. Residues Asp-29, Asn-31, Asp-33, Thr-35, Glu-40, Asp-60, Asn-62, Asp-64, Arg-66, Glu-71, Asp-98, Asp-100, Asn-102, Arg-104, Glu-109, Asp-134, Asp-136, Asp-138, His-140, Glu-145, Asp-167, Asn-169, Asp-171, Ser-173, Glu-178, Asp-204, Asn-206, Asp-208, Arg-210, and Glu-215 each coordinate Ca(2+).

As to expression, aboral ectoderm, a squamous epithelium covering the surface of the late stage embryo and larva.

Calcium-binding protein involved in larval development and metamorphosis. Likely to function as calcium buffers mediating the transport of calcium from the sea water to the blastocoel where calcium is required for skeleton formation. This is Calcium-binding protein LPS1-beta from Lytechinus pictus (Painted sea urchin).